A 208-amino-acid chain; its full sequence is Thymidylate kinase (208 aa).

Residue 7–14 (GIDGSGKS) participates in ATP binding.

This sequence belongs to the thymidylate kinase family.

It catalyses the reaction dTMP + ATP = dTDP + ADP. Its function is as follows. Phosphorylation of dTMP to form dTDP in both de novo and salvage pathways of dTTP synthesis. This chain is Thymidylate kinase, found in Kosmotoga olearia (strain ATCC BAA-1733 / DSM 21960 / TBF 19.5.1).